A 206-amino-acid chain; its full sequence is Guanylate kinase (206 aa).

The Guanylate kinase-like domain occupies 13–193 (PLLLVVSGPS…AVSEIMSIIS (181 aa)). 20–27 (GPSGVGKD) provides a ligand contact to ATP.

The protein belongs to the guanylate kinase family.

The protein resides in the cytoplasm. It catalyses the reaction GMP + ATP = GDP + ADP. In terms of biological role, essential for recycling GMP and indirectly, cGMP. The protein is Guanylate kinase of Dehalococcoides mccartyi (strain ATCC BAA-2266 / KCTC 15142 / 195) (Dehalococcoides ethenogenes (strain 195)).